We begin with the raw amino-acid sequence, 350 residues long: Protein pelota homolog (350 aa).

Belongs to the eukaryotic release factor 1 family. Pelota subfamily. In terms of assembly, monomer. The cofactor is a divalent metal cation.

The protein localises to the cytoplasm. In terms of biological role, may function in recognizing stalled ribosomes, interact with stem-loop structures in stalled mRNA molecules, and effect endonucleolytic cleavage of the mRNA. May play a role in the release non-functional ribosomes and degradation of damaged mRNAs. Has endoribonuclease activity. The polypeptide is Protein pelota homolog (Methanosarcina mazei (strain ATCC BAA-159 / DSM 3647 / Goe1 / Go1 / JCM 11833 / OCM 88) (Methanosarcina frisia)).